A 172-amino-acid polypeptide reads, in one-letter code: Large ribosomal subunit protein uL10 (172 aa).

The protein belongs to the universal ribosomal protein uL10 family. In terms of assembly, part of the ribosomal stalk of the 50S ribosomal subunit. The N-terminus interacts with L11 and the large rRNA to form the base of the stalk. The C-terminus forms an elongated spine to which L12 dimers bind in a sequential fashion forming a multimeric L10(L12)X complex.

Its function is as follows. Forms part of the ribosomal stalk, playing a central role in the interaction of the ribosome with GTP-bound translation factors. The protein is Large ribosomal subunit protein uL10 of Parvibaculum lavamentivorans (strain DS-1 / DSM 13023 / NCIMB 13966).